A 267-amino-acid chain; its full sequence is Thiamine pyrophosphokinase 1 (267 aa).

The protein belongs to the thiamine pyrophosphokinase family. As to expression, expressed in roots, leaves and flowers.

It is found in the cytoplasm. It localises to the cytosol. The enzyme catalyses thiamine + ATP = thiamine diphosphate + AMP + H(+). It participates in cofactor biosynthesis; thiamine diphosphate biosynthesis; thiamine diphosphate from thiamine: step 1/1. Its function is as follows. Catalyzes the phosphorylation of thiamine to thiamine pyrophosphate (TPP). TPP is an active cofactor for enzymes involved in glycolysis and energy production. Plant leaves require high levels of TPP for photosynthesis and carbohydrate metabolism. This is Thiamine pyrophosphokinase 1 from Arabidopsis thaliana (Mouse-ear cress).